We begin with the raw amino-acid sequence, 344 residues long: Uroporphyrinogen decarboxylase (344 aa).

Residues 26–30 (RQAGR), Phe-45, Asp-75, Tyr-151, Ser-206, and His-320 contribute to the substrate site.

It belongs to the uroporphyrinogen decarboxylase family. Homodimer.

Its subcellular location is the cytoplasm. It catalyses the reaction uroporphyrinogen III + 4 H(+) = coproporphyrinogen III + 4 CO2. It functions in the pathway porphyrin-containing compound metabolism; protoporphyrin-IX biosynthesis; coproporphyrinogen-III from 5-aminolevulinate: step 4/4. Its function is as follows. Catalyzes the decarboxylation of four acetate groups of uroporphyrinogen-III to yield coproporphyrinogen-III. The chain is Uroporphyrinogen decarboxylase from Staphylococcus saprophyticus subsp. saprophyticus (strain ATCC 15305 / DSM 20229 / NCIMB 8711 / NCTC 7292 / S-41).